We begin with the raw amino-acid sequence, 551 residues long: Adenylyl cyclase-associated protein (551 aa).

The disordered stretch occupies residues 34–55 (SGHKPLPNMHRPSRDSNSQTHN). Serine 92 carries the post-translational modification Phosphoserine. Phosphothreonine is present on threonine 96. Residues 288 to 300 (SASKTQAPSSGDS) show a composition bias toward polar residues. Disordered stretches follow at residues 288–333 (SASK…NKGD) and 348–395 (TSGL…PVKP). Over residues 305-315 (LPPPPPPPPPS) the composition is skewed to pro residues. Residues 352–361 (RKVDKSEMTH) show a composition bias toward basic and acidic residues. Residues 395–529 (PPRIELENTK…EEGDYAERAV (135 aa)) form the C-CAP/cofactor C-like domain.

Belongs to the CAP family.

Its function is as follows. The N-terminal domain binds to adenylyl cyclase, thereby enabling adenylyl cyclase to be activated by upstream regulatory signals, such as Ras. The C-terminal domain is required for normal cellular morphology and growth control. The protein is Adenylyl cyclase-associated protein (cap1) of Schizosaccharomyces pombe (strain 972 / ATCC 24843) (Fission yeast).